The primary structure comprises 252 residues: NAC domain-containing protein 23 (252 aa).

One can recognise an NAC domain in the interval 12-177; the sequence is MPPGFRFQPT…EMVLCRISNK (166 aa). The DNA-binding element occupies 110–183; that stretch reads TAVKRRFVFY…ISNKDLPKPP (74 aa). The disordered stretch occupies residues 225–252; sequence VDDAAAGTDDPGDLDEEIDDSMQRNHGG. Over residues 234–244 the composition is skewed to acidic residues; it reads DPGDLDEEIDD.

In terms of assembly, forms heterodimers with NAC26. As to expression, expressed in stems and panicles. Expressed in developing endosperm.

The protein localises to the nucleus. The protein resides in the cytoplasm. In terms of biological role, transcription factor involved in the regulation of seed size. Binds to DNA-specific sequences of CLPD1 and OAT promoters in vitro. In Oryza sativa subsp. japonica (Rice), this protein is NAC domain-containing protein 23.